Consider the following 361-residue polypeptide: Eukaryotic translation initiation factor 3 subunit F (361 aa).

Composition is skewed to low complexity over residues 1-11 (MATPVVSASGP) and 21-42 (AAPASASASVPAPTPAPAAAAV). Positions 1-42 (MATPVVSASGPPATPAPAPVAAPASASASVPAPTPAPAAAAV) are disordered. Ala-2 carries the post-translational modification N-acetylalanine. Ser-50 carries the post-translational modification Phosphoserine; by CDK11; in vitro. The segment covering 55 to 78 (AAAATTAAPGQTPASAQAPAQTPA) has biased composition (low complexity). The interval 55 to 86 (AAAATTAAPGQTPASAQAPAQTPAPALPGPAL) is disordered. The region spanning 96-226 (VRLHPVILAS…IKAYVSTLMG (131 aa)) is the MPN domain. Residue Lys-242 is modified to N6-acetyllysine. Residue Ser-262 is modified to Phosphoserine.

The protein belongs to the eIF-3 subunit F family. In terms of assembly, component of the eukaryotic translation initiation factor 3 (eIF-3) complex, which is composed of 13 subunits: EIF3A, EIF3B, EIF3C, EIF3D, EIF3E, EIF3F, EIF3G, EIF3H, EIF3I, EIF3J, EIF3K, EIF3L and EIF3M. The eIF-3 complex appears to include 3 stable modules: module A is composed of EIF3A, EIF3B, EIF3G and EIF3I; module B is composed of EIF3F, EIF3H, and EIF3M; and module C is composed of EIF3C, EIF3D, EIF3E, EIF3K and EIF3L. EIF3C of module C binds EIF3B of module A and EIF3H of module B, thereby linking the three modules. EIF3J is a labile subunit that binds to the eIF-3 complex via EIF3B. The eIF-3 complex interacts with RPS6KB1 under conditions of nutrient depletion. Mitogenic stimulation leads to binding and activation of a complex composed of MTOR and RPTOR, leading to phosphorylation and release of RPS6KB1 and binding of EIF4B to eIF-3. Interacts with RNF139; the interaction leads to protein translation inhibitions in a ubiquitination-dependent manner. Interacts with DTX1, the interaction is required for deubiquitinating activity towards NOTCH1. Phosphorylation is enhanced upon serum stimulation. Phosphorylated during apoptosis by caspase-processed CDK11.

Its subcellular location is the cytoplasm. The enzyme catalyses Thiol-dependent hydrolysis of ester, thioester, amide, peptide and isopeptide bonds formed by the C-terminal Gly of ubiquitin (a 76-residue protein attached to proteins as an intracellular targeting signal).. In terms of biological role, component of the eukaryotic translation initiation factor 3 (eIF-3) complex, which is required for several steps in the initiation of protein synthesis. The eIF-3 complex associates with the 40S ribosome and facilitates the recruitment of eIF-1, eIF-1A, eIF-2:GTP:methionyl-tRNAi and eIF-5 to form the 43S pre-initiation complex (43S PIC). The eIF-3 complex stimulates mRNA recruitment to the 43S PIC and scanning of the mRNA for AUG recognition. The eIF-3 complex is also required for disassembly and recycling of post-termination ribosomal complexes and subsequently prevents premature joining of the 40S and 60S ribosomal subunits prior to initiation. The eIF-3 complex specifically targets and initiates translation of a subset of mRNAs involved in cell proliferation, including cell cycling, differentiation and apoptosis, and uses different modes of RNA stem-loop binding to exert either translational activation or repression. Functionally, deubiquitinates activated NOTCH1, promoting its nuclear import, thereby acting as a positive regulator of Notch signaling. This chain is Eukaryotic translation initiation factor 3 subunit F, found in Macaca fascicularis (Crab-eating macaque).